The sequence spans 206 residues: Ribosomal RNA large subunit methyltransferase E (206 aa).

S-adenosyl-L-methionine contacts are provided by G60, W62, D80, D96, and D121. The active-site Proton acceptor is the K161.

The protein belongs to the class I-like SAM-binding methyltransferase superfamily. RNA methyltransferase RlmE family.

It is found in the cytoplasm. The catalysed reaction is uridine(2552) in 23S rRNA + S-adenosyl-L-methionine = 2'-O-methyluridine(2552) in 23S rRNA + S-adenosyl-L-homocysteine + H(+). Its function is as follows. Specifically methylates the uridine in position 2552 of 23S rRNA at the 2'-O position of the ribose in the fully assembled 50S ribosomal subunit. This is Ribosomal RNA large subunit methyltransferase E from Francisella tularensis subsp. holarctica (strain FTNF002-00 / FTA).